The following is a 177-amino-acid chain: Small ribosomal subunit protein uS13 (177 aa).

The segment covering 132 to 145 (GVRHKRGQKVRGQR) has biased composition (basic residues). The disordered stretch occupies residues 132-177 (GVRHKRGQKVRGQRTKSTGRTEGTIGVNVEAIKEEQAEDAAAEDDE). Residues 167–177 (QAEDAAAEDDE) show a composition bias toward acidic residues.

The protein belongs to the universal ribosomal protein uS13 family. In terms of assembly, part of the 30S ribosomal subunit. Forms a loose heterodimer with protein S19. Forms two bridges to the 50S subunit in the 70S ribosome.

Located at the top of the head of the 30S subunit, it contacts several helices of the 16S rRNA. In the 70S ribosome it contacts the 23S rRNA (bridge B1a) and protein L5 of the 50S subunit (bridge B1b), connecting the 2 subunits; these bridges are implicated in subunit movement. The chain is Small ribosomal subunit protein uS13 from Haloarcula marismortui (strain ATCC 43049 / DSM 3752 / JCM 8966 / VKM B-1809) (Halobacterium marismortui).